Reading from the N-terminus, the 257-residue chain is Large ribosomal subunit protein uL3 (257 aa).

Q151 carries the N5-methylglutamine modification. Residues 218–257 (YPASIKSAANTNTAPADAPVETPAEEAVVDTAATDGAQES) form a disordered region. Low complexity predominate over residues 225 to 236 (AANTNTAPADAP).

The protein belongs to the universal ribosomal protein uL3 family. As to quaternary structure, part of the 50S ribosomal subunit. Forms a cluster with proteins L14 and L19. Post-translationally, methylated by PrmB.

One of the primary rRNA binding proteins, it binds directly near the 3'-end of the 23S rRNA, where it nucleates assembly of the 50S subunit. This is Large ribosomal subunit protein uL3 from Sphingopyxis alaskensis (strain DSM 13593 / LMG 18877 / RB2256) (Sphingomonas alaskensis).